Here is a 69-residue protein sequence, read N- to C-terminus: Cytochrome c oxidase subunit 8A, mitochondrial (69 aa).

The transit peptide at 1–25 (MSVLTSLLLRGLTGSARWLPVPRAK) directs the protein to the mitochondrion. The short motif at 2 to 19 (SVLTSLLLRGLTGSARWL) is the SIFI-degron element. Topologically, residues 26-36 (VHSMPPEVELG) are mitochondrial matrix. The chain crosses the membrane as a helical span at residues 37–60 (IMEKAIGLTSCFVSLFLPAGWILS). Topologically, residues 61 to 69 (HLEDYKRPE) are mitochondrial intermembrane.

It belongs to the cytochrome c oxidase VIII family. In terms of assembly, component of the cytochrome c oxidase (complex IV, CIV), a multisubunit enzyme composed of 14 subunits. The complex is composed of a catalytic core of 3 subunits MT-CO1, MT-CO2 and MT-CO3, encoded in the mitochondrial DNA, and 11 supernumerary subunits COX4I, COX5A, COX5B, COX6A, COX6B, COX6C, COX7A, COX7B, COX7C, COX8 and NDUFA4, which are encoded in the nuclear genome. The complex exists as a monomer or a dimer and forms supercomplexes (SCs) in the inner mitochondrial membrane with NADH-ubiquinone oxidoreductase (complex I, CI) and ubiquinol-cytochrome c oxidoreductase (cytochrome b-c1 complex, complex III, CIII), resulting in different assemblies (supercomplex SCI(1)III(2)IV(1) and megacomplex MCI(2)III(2)IV(2)). In terms of processing, in response to mitochondrial stress, the precursor protein is ubiquitinated by the SIFI complex in the cytoplasm before mitochondrial import, leading to its degradation. Within the SIFI complex, UBR4 initiates ubiquitin chain that are further elongated or branched by KCMF1.

It localises to the mitochondrion inner membrane. It participates in energy metabolism; oxidative phosphorylation. Functionally, component of the cytochrome c oxidase, the last enzyme in the mitochondrial electron transport chain which drives oxidative phosphorylation. The respiratory chain contains 3 multisubunit complexes succinate dehydrogenase (complex II, CII), ubiquinol-cytochrome c oxidoreductase (cytochrome b-c1 complex, complex III, CIII) and cytochrome c oxidase (complex IV, CIV), that cooperate to transfer electrons derived from NADH and succinate to molecular oxygen, creating an electrochemical gradient over the inner membrane that drives transmembrane transport and the ATP synthase. Cytochrome c oxidase is the component of the respiratory chain that catalyzes the reduction of oxygen to water. Electrons originating from reduced cytochrome c in the intermembrane space (IMS) are transferred via the dinuclear copper A center (CU(A)) of subunit 2 and heme A of subunit 1 to the active site in subunit 1, a binuclear center (BNC) formed by heme A3 and copper B (CU(B)). The BNC reduces molecular oxygen to 2 water molecules using 4 electrons from cytochrome c in the IMS and 4 protons from the mitochondrial matrix. This is Cytochrome c oxidase subunit 8A, mitochondrial (COX8A) from Macaca silenus (Lion-tailed macaque).